The chain runs to 262 residues: Probable aminoglycoside 3'-phosphotransferase (262 aa).

Asp187 serves as the catalytic Proton acceptor.

It belongs to the aminoglycoside phosphotransferase family.

The enzyme catalyses kanamycin A + ATP = kanamycin 3'-phosphate + ADP + H(+). The chain is Probable aminoglycoside 3'-phosphotransferase (ymdC) from Lactococcus lactis subsp. lactis (strain IL1403) (Streptococcus lactis).